We begin with the raw amino-acid sequence, 147 residues long: Large ribosomal subunit protein uL13 (147 aa).

It belongs to the universal ribosomal protein uL13 family. Part of the 50S ribosomal subunit.

This protein is one of the early assembly proteins of the 50S ribosomal subunit, although it is not seen to bind rRNA by itself. It is important during the early stages of 50S assembly. The polypeptide is Large ribosomal subunit protein uL13 (Rhodococcus jostii (strain RHA1)).